Consider the following 286-residue polypeptide: Shikimate dehydrogenase (NADP(+)) (286 aa).

Residues 20 to 22 (SLS) and T65 contribute to the shikimate site. K69 acts as the Proton acceptor in catalysis. D81 lines the NADP(+) pocket. N90 and D105 together coordinate shikimate. NADP(+) is bound by residues 128–132 (GAGGA) and T217. Position 219 (Y219) interacts with shikimate. NADP(+) is bound at residue G240.

It belongs to the shikimate dehydrogenase family. In terms of assembly, homodimer.

It catalyses the reaction shikimate + NADP(+) = 3-dehydroshikimate + NADPH + H(+). It functions in the pathway metabolic intermediate biosynthesis; chorismate biosynthesis; chorismate from D-erythrose 4-phosphate and phosphoenolpyruvate: step 4/7. Its function is as follows. Involved in the biosynthesis of the chorismate, which leads to the biosynthesis of aromatic amino acids. Catalyzes the reversible NADPH linked reduction of 3-dehydroshikimate (DHSA) to yield shikimate (SA). The chain is Shikimate dehydrogenase (NADP(+)) from Syntrophobacter fumaroxidans (strain DSM 10017 / MPOB).